A 467-amino-acid chain; its full sequence is H(+)/Cl(-) exchange transporter ClcA (467 aa).

Residues 1–30 (MTKRERIVKSVLAHVPKDAINQFVSRGSTP) are Cytoplasmic-facing. Residues 31–67 (FSVLIMAAIVGTLAGFVGTYFELAVHFVSETRTEWLR) form a helical membrane-spanning segment. The Periplasmic segment spans residues 68 to 74 (SEIGSVL). A helical membrane pass occupies residues 75-98 (PLWLAAVLISALLAFIGYFLVHRF). The Selectivity filter part_1 signature appears at 104–108 (GSGIP). Serine 105 provides a ligand contact to chloride. Positions 107–114 (IPEIEGAM) form an intramembrane region, helical. Topologically, residues 115–121 (DNIRPVR) are cytoplasmic. The next 2 membrane-spanning stretches (helical) occupy residues 122–139 (WWRV…ALGS) and 146–164 (EGPT…TDIF). The Selectivity filter part_2 motif lies at 144 to 148 (GREGP). Residues 165–174 (RVKDDDTRHS) are Cytoplasmic-facing. 2 consecutive intramembrane regions (helical) follow at residues 175 to 187 (LLAS…LAAA) and 191 to 199 (PLAGIMFVV). Over 200–212 (EEMRPQFRYSLIS) the chain is Cytoplasmic. Residues 213–230 (IRAVIISAIMANIVFRAI) form a helical membrane-spanning segment. At 231 to 250 (NGQDAVITMPQYQSPALQTL) the chain is on the periplasmic side. A helical transmembrane segment spans residues 251-279 (WLFLLLGALFGVFGVIFNKLITVAQDSFV). Topologically, residues 280–285 (AIHKND) are cytoplasmic. The helical transmembrane segment at 286 to 307 (RKRYLITGSILGGVFGLLLLYV) threads the bilayer. Topologically, residues 308–327 (PQLTGGGIALIPDVTTGNYS) are periplasmic. Helical transmembrane passes span 328-347 (ISIL…LCFG) and 353-374 (GIFA…ASAD). The Selectivity filter part_3 motif lies at 353 to 357 (GIFAP). The chloride site is built by isoleucine 354 and phenylalanine 355. At 375 to 384 (VLLPTLDIEP) the chain is on the periplasmic side. The segment at residues 385–399 (GVFAIAGMGALFAAT) is an intramembrane region (helical). The note=Loop between two helices intramembrane region spans 400–402 (VRA). The helical intramembrane region spans 403-414 (PITGILLVIEMT). An intramembrane region (note=Loop between two helices) is located at residues 415–419 (NNYYL). Residues 420 to 436 (ILPLIITCLGAVIVAQL) traverse the membrane as a helical segment. At 437–467 (LGGQPIYSQLLHRTLKNDKLRQQDLPENQAS) the chain is on the cytoplasmic side. Tyrosine 443 lines the chloride pocket.

It belongs to the chloride channel (TC 2.A.49) family. ClcA subfamily. In terms of assembly, homodimer.

The protein resides in the cell inner membrane. It carries out the reaction 2 chloride(in) + H(+)(out) = 2 chloride(out) + H(+)(in). In terms of biological role, proton-coupled chloride transporter. Functions as antiport system and exchanges two chloride ions for 1 proton. Probably acts as an electrical shunt for an outwardly-directed proton pump that is linked to amino acid decarboxylation, as part of the extreme acid resistance (XAR) response. In Vibrio parahaemolyticus serotype O3:K6 (strain RIMD 2210633), this protein is H(+)/Cl(-) exchange transporter ClcA.